Consider the following 113-residue polypeptide: uncharacterized protein (113 aa).

The 55-residue stretch at 16-70 folds into the HTH cro/C1-type domain; sequence LYEYLEPLDLKINELAELLHVHRNSVSALINNNRKLTTEMAFRLAKVFDTTVDFW. A DNA-binding region (H-T-H motif) is located at residues 27–46; the sequence is INELAELLHVHRNSVSALIN.

Belongs to the VapA/VapI family.

This is an uncharacterized protein from Escherichia coli O6:H1 (strain CFT073 / ATCC 700928 / UPEC).